A 350-amino-acid chain; its full sequence is 3-dehydroquinate synthase (350 aa).

Residues glycine 106 to aspartate 110, threonine 130 to serine 131, lysine 143, and lysine 152 contribute to the NAD(+) site. 3 residues coordinate Zn(2+): glutamate 185, histidine 246, and histidine 263.

Belongs to the sugar phosphate cyclases superfamily. Dehydroquinate synthase family. Co(2+) serves as cofactor. Zn(2+) is required as a cofactor. The cofactor is NAD(+).

Its subcellular location is the cytoplasm. The enzyme catalyses 7-phospho-2-dehydro-3-deoxy-D-arabino-heptonate = 3-dehydroquinate + phosphate. Its pathway is metabolic intermediate biosynthesis; chorismate biosynthesis; chorismate from D-erythrose 4-phosphate and phosphoenolpyruvate: step 2/7. Its function is as follows. Catalyzes the conversion of 3-deoxy-D-arabino-heptulosonate 7-phosphate (DAHP) to dehydroquinate (DHQ). The chain is 3-dehydroquinate synthase from Clostridium botulinum (strain Alaska E43 / Type E3).